The chain runs to 557 residues: Formate--tetrahydrofolate ligase (557 aa).

65-72 lines the ATP pocket; the sequence is TPAGEGKT.

This sequence belongs to the formate--tetrahydrofolate ligase family.

The enzyme catalyses (6S)-5,6,7,8-tetrahydrofolate + formate + ATP = (6R)-10-formyltetrahydrofolate + ADP + phosphate. The protein operates within one-carbon metabolism; tetrahydrofolate interconversion. This chain is Formate--tetrahydrofolate ligase, found in Methylorubrum populi (strain ATCC BAA-705 / NCIMB 13946 / BJ001) (Methylobacterium populi).